The primary structure comprises 465 residues: MATGKIIQIIGAVVDVEFNQDSVPKIYNALEVKNKQYKLILEVQQQLGSGVVRTIAMGSSNGLKRGLIVTDLGHYIKVPVGEATLGRIINVLGETIDNKGALKNNQSDKIEYWEIHRSPPSYRDQASCREILETGIKVIDLICPFSKGGKVGLFGGAGVGKTVNMMELIRNIAVEHSGYSVFTGVGERTREGNDFYHEMNDSQVLDKVSLVYGQMNEPPGNRLRVAFTGLTIAEKFRDEGKDVLLFIDNIYRYTLAGTEVSALLGRMPSAVGYQPTLAEEMGLLQERITSTKNGSITSVQAVYVPADDLTDPSPATTFAHLDSTVTLSRQIASLGIYPAIDPLNSTSRQLDPYIVGDEHYETALGVQSILQRYQELKDIIAILGMDELAEKDKLLVSRARKIQRFLSQPFFVAEVFTGFPGKYVSLKDNIRAFKGIIKGEFDDLPEQAFYMVGSIEEVIEKAKKL.

155 to 162 is an ATP binding site; it reads GGAGVGKT.

The protein belongs to the ATPase alpha/beta chains family. As to quaternary structure, F-type ATPases have 2 components, CF(1) - the catalytic core - and CF(0) - the membrane proton channel. CF(1) has five subunits: alpha(3), beta(3), gamma(1), delta(1), epsilon(1). CF(0) has three main subunits: a(1), b(2) and c(9-12). The alpha and beta chains form an alternating ring which encloses part of the gamma chain. CF(1) is attached to CF(0) by a central stalk formed by the gamma and epsilon chains, while a peripheral stalk is formed by the delta and b chains.

It is found in the cell membrane. It carries out the reaction ATP + H2O + 4 H(+)(in) = ADP + phosphate + 5 H(+)(out). In terms of biological role, produces ATP from ADP in the presence of a proton gradient across the membrane. The catalytic sites are hosted primarily by the beta subunits. The protein is ATP synthase subunit beta of Buchnera aphidicola subsp. Acyrthosiphon pisum (strain 5A).